Reading from the N-terminus, the 584-residue chain is FAD-linked oxidoreductase OXR2 (584 aa).

A signal peptide spans 1–22 (MRSIISAFILSLNFCTQPLVRG). Asn-75, Asn-97, Asn-115, Asn-225, Asn-302, Asn-321, and Asn-507 each carry an N-linked (GlcNAc...) asparagine glycan. Residues 128-310 (LGMLSEKYIA…LNATFKVEPV (183 aa)) form the FAD-binding PCMH-type domain.

This sequence belongs to the oxygen-dependent FAD-linked oxidoreductase family. It depends on FAD as a cofactor.

The protein operates within secondary metabolite biosynthesis. In terms of biological role, FAD-linked oxidoreductase; part of the gene cluster that mediates the biosynthesis of a tyrosine-derived cytochalasan acting as a fungal signal recognized by resistant rice plants and leads to avirulence in Pi33 resistant rice cultivars. The first step in the pathway is catalyzed by the hybrid PKS-NRPS ACE1, assisted by the enoyl reductase RAP1, that are responsible for fusion of the tyrosine precursor and the polyketide backbone. The polyketide synthase module (PKS) of ACE1 is responsible for the synthesis of the polyketide backbone and the downstream nonribosomal peptide synthetase (NRPS) amidates the carboxyl end of the polyketide with the tyrosine precursor. Because ACE1 lacks a designated enoylreductase (ER) domain, the required activity is provided the enoyl reductase RAP1. Reduction by the hydrolyase ORFZ, followed by dehydration and intra-molecular Diels-Alder cyclization by the Diels-Alderase ORF3 then yield the required isoindolone-fused macrocycle. A number of oxidative steps catalyzed by the tailoring enzymes identified within the cluster, including cytochrome P450 monooxygenases CYP1 to CYP4, the FAD-linked oxidoreductase OXR2 and the short-chain dehydrogenase/reductase OXR1, are further required to afford the final cytochalasans that confer avirulence and which have still to be identified. The monooxygenase CYP1 has been shown to be a site-selective C-18 hydroxylase whereas the function of CYP3 is the site-selective epoxidation of the C-6/C-7 olefin that is present in some intermediate compounds. Finally, SYN2 and RAP2 are not required for avirulence in Pi33 resistant rice cultivars. In Pyricularia oryzae (strain 70-15 / ATCC MYA-4617 / FGSC 8958) (Rice blast fungus), this protein is FAD-linked oxidoreductase OXR2.